A 759-amino-acid polypeptide reads, in one-letter code: Serine/threonine-protein kinase HRK1 (759 aa).

The tract at residues 1 to 32 (MPNLLSRNPFHGHHNDHHHDRENSSNNPPQLI) is disordered. S37 carries the post-translational modification Phosphoserine. The tract at residues 45–162 (KQSNDSLRSE…PPPSKSTSTV (118 aa)) is disordered. The span at 59–97 (SMKSTTTTTNYTTTNLNNNTHSHSNATSISTNNYNNNYE) shows a compositional bias: low complexity. The segment covering 113-122 (SPASPKQTHS) has biased composition (polar residues). A Protein kinase domain is found at 215-722 (GKLGKLLGSG…LDDIFNDEWF (508 aa)). ATP is bound by residues 221–229 (LGSGAGGSV) and K244. D340 serves as the catalytic Proton acceptor. Phosphoserine is present on residues S382 and S472. The segment covering 493–502 (PNTPASIQGK) has biased composition (polar residues). Disordered regions lie at residues 493 to 578 (PNTP…GRVD) and 614 to 682 (AANA…KIIH). At T495 the chain carries Phosphothreonine. S498 carries the phosphoserine modification. Over residues 510–519 (VEEETEENKE) the composition is skewed to acidic residues. Over residues 520–547 (DDSNNDKESTPDNDKESTIDIKISKNEN) the composition is skewed to basic and acidic residues. The span at 614–646 (AANANPDMVPQNNPQQQQQQQQQQQQQQQQQQQ) shows a compositional bias: low complexity. Residues 663–672 (ASDNKSSQQH) show a composition bias toward polar residues.

This sequence belongs to the protein kinase superfamily. Ser/Thr protein kinase family.

The protein localises to the cytoplasm. It carries out the reaction L-seryl-[protein] + ATP = O-phospho-L-seryl-[protein] + ADP + H(+). The enzyme catalyses L-threonyl-[protein] + ATP = O-phospho-L-threonyl-[protein] + ADP + H(+). Its function is as follows. Involved in regulating the activity of the plasma membrane proton pump PMA1. This chain is Serine/threonine-protein kinase HRK1 (HRK1), found in Saccharomyces cerevisiae (strain ATCC 204508 / S288c) (Baker's yeast).